A 494-amino-acid chain; its full sequence is Keratin, type I cytoskeletal 12 (494 aa).

A compositionally biased stretch (polar residues) spans 1 to 12 (MDLSNNTMSLSV). Residues 1–32 (MDLSNNTMSLSVRTPGLSRRLSSQSVIGRPRG) are disordered. Residues 1-124 (MDLSNNTMSL…GNDGGLLSGS (124 aa)) are head. The interval 125-160 (EKETMQNLNDRLASYLDKVRALEEANTELENKIREW) is coil 1A. One can recognise an IF rod domain in the interval 125 to 440 (EKETMQNLND…RLLDGEAQGD (316 aa)). The segment at 164–182 (RGTGTADASQSDYSKYYPL) is linker 1. The tract at residues 183–274 (IEDLRNKIIS…KNHEDELQSF (92 aa)) is coil 1B. The tract at residues 275–297 (RVGGPGEVSVEMDAAPGVDLTRL) is linker 12. The interval 298-435 (LNDMRAQYET…IETYRRLLDG (138 aa)) is coil 2. The tail stretch occupies residues 436-494 (EAQGDGLEESLFVTDSKSQAQSTDSSKDPTKTRKIKTVVQEMVNGEVVSSQVQEIEELM). The interval 446-468 (LFVTDSKSQAQSTDSSKDPTKTR) is disordered. A compositionally biased stretch (polar residues) spans 448 to 459 (VTDSKSQAQSTD).

This sequence belongs to the intermediate filament family. As to quaternary structure, heterotetramer of two type I and two type II keratins. Keratin-3 associates with keratin-12. Expressed in the corneal epithelium (at protein level).

Its function is as follows. Involved in corneal epithelium organization, integrity and corneal keratin expression. The chain is Keratin, type I cytoskeletal 12 (KRT12) from Homo sapiens (Human).